The chain runs to 316 residues: Probable cell division protein WhiA (316 aa).

The segment at residues 275–309 (TLKELGEMVSGGKISKSGINHRLRKIDEIAEKLRA) is a DNA-binding region (H-T-H motif).

It belongs to the WhiA family.

Functionally, involved in cell division and chromosome segregation. The chain is Probable cell division protein WhiA from Bacillus mycoides (strain KBAB4) (Bacillus weihenstephanensis).